We begin with the raw amino-acid sequence, 429 residues long: E3 ubiquitin-protein ligase ZNRF4 (429 aa).

The first 27 residues, 1–27 (MLRCRPEPLMPRATRVAVAVSLPLSHA), serve as a signal peptide directing secretion. The Lumenal portion of the chain corresponds to 28 to 250 (VIPTQLPSHP…PPCRDLDCHP (223 aa)). The interval 30-64 (PTQLPSHPGHRPSGRPRRCPKAPCLPSPVGLSSTQ) is disordered. Over residues 37–49 (PGHRPSGRPRRCP) the composition is skewed to basic residues. N-linked (GlcNAc...) asparagine glycosylation occurs at N152. A PA domain is found at 152–223 (NRSLGAIALI…VGEAASQDLR (72 aa)). A helical transmembrane segment spans residues 251 to 271 (VLTVSWALGRTLALVVSTLFV). Topologically, residues 272-429 (LNRLWLWAQA…SPAPPEAPGQ (158 aa)) are cytoplasmic. The RING-type; atypical zinc finger occupies 309-352 (CAICLDEYEEGDQLKILPCSHTYHCKCIDPWFSQAPRRSCPVCK). 2 disordered regions span residues 358–381 (TEDS…GHRP) and 409–429 (TTSL…APGQ). Positions 409–420 (TTSLEAEDTTVS) are enriched in polar residues.

Interacts with CANX.

Its subcellular location is the endoplasmic reticulum membrane. It carries out the reaction S-ubiquitinyl-[E2 ubiquitin-conjugating enzyme]-L-cysteine + [acceptor protein]-L-lysine = [E2 ubiquitin-conjugating enzyme]-L-cysteine + N(6)-ubiquitinyl-[acceptor protein]-L-lysine.. It participates in protein modification; protein ubiquitination. Its function is as follows. E3 ubiquitin-protein ligase that acts as a negative regulator of NOD2 signaling by mediating ubiquitination and degradation of RIPK2. Also catalyzes ubiquitination and proteasomal degradation of CANX within the endoplasmic reticulum. Could have a role in spermatogenesis. The polypeptide is E3 ubiquitin-protein ligase ZNRF4 (ZNRF4) (Macaca fascicularis (Crab-eating macaque)).